We begin with the raw amino-acid sequence, 62 residues long: UPF0370 protein plu2724 (62 aa).

A helical transmembrane segment spans residues 3–23 (WLADYWWIILILLVGVLLNAI). A disordered region spans residues 36 to 62 (DNKPELPPHRDLNSKWDDEDDWPQKKP).

The protein belongs to the UPF0370 family.

Its subcellular location is the cell membrane. This Photorhabdus laumondii subsp. laumondii (strain DSM 15139 / CIP 105565 / TT01) (Photorhabdus luminescens subsp. laumondii) protein is UPF0370 protein plu2724.